Reading from the N-terminus, the 1482-residue chain is Type VII secretion system protein EssC (1482 aa).

Residues 1–229 (MHKLIIKYNK…RPPQPIQKNN (229 aa)) lie on the Cytoplasmic side of the membrane. Residues 230-252 (TVIWRSIIPPLVMIALTVVIFLV) traverse the membrane as a helical segment. Over 253 to 256 (RPIG) the chain is Extracellular. Residues 257–279 (IYILMMIGMSTVTIVFGITTYFS) form a helical membrane-spanning segment. The Cytoplasmic segment spans residues 280-1482 (EKKKYNKDVE…EYQKIKLMEG (1203 aa)). 2 FtsK domains span residues 652–846 (DDIL…QDSN) and 997–1183 (QGPM…NELT). ATP is bound by residues 672–679 (GTTGSGKS) and 1014–1021 (GSPGYGRT).

This sequence belongs to the EssC family. As to quaternary structure, homooligomer. Interacts with EsaE.

It localises to the cell membrane. Component of the type VII secretion system (Ess). Required for the secretion of substrates including EsxA and EsxB. However, unable to support secretion of the substrate protein EsxC. The protein is Type VII secretion system protein EssC of Staphylococcus aureus (strain MRSA252).